The sequence spans 412 residues: Multifunctional CCA protein (412 aa).

ATP contacts are provided by Gly-8 and Arg-11. Residues Gly-8 and Arg-11 each coordinate CTP. Residues Asp-21 and Asp-23 each contribute to the Mg(2+) site. Residues Arg-91, Arg-137, and Arg-140 each coordinate ATP. Arg-91, Arg-137, and Arg-140 together coordinate CTP. The region spanning 228-329 is the HD domain; sequence TGIHTLMTLS…VKLFDSIDAW (102 aa).

It belongs to the tRNA nucleotidyltransferase/poly(A) polymerase family. Bacterial CCA-adding enzyme type 1 subfamily. Monomer. Can also form homodimers and oligomers. Requires Mg(2+) as cofactor. It depends on Ni(2+) as a cofactor.

The catalysed reaction is a tRNA precursor + 2 CTP + ATP = a tRNA with a 3' CCA end + 3 diphosphate. It carries out the reaction a tRNA with a 3' CCA end + 2 CTP + ATP = a tRNA with a 3' CCACCA end + 3 diphosphate. In terms of biological role, catalyzes the addition and repair of the essential 3'-terminal CCA sequence in tRNAs without using a nucleic acid template. Adds these three nucleotides in the order of C, C, and A to the tRNA nucleotide-73, using CTP and ATP as substrates and producing inorganic pyrophosphate. tRNA 3'-terminal CCA addition is required both for tRNA processing and repair. Also involved in tRNA surveillance by mediating tandem CCA addition to generate a CCACCA at the 3' terminus of unstable tRNAs. While stable tRNAs receive only 3'-terminal CCA, unstable tRNAs are marked with CCACCA and rapidly degraded. In Escherichia coli O139:H28 (strain E24377A / ETEC), this protein is Multifunctional CCA protein.